Reading from the N-terminus, the 1550-residue chain is Cellulose synthase 1 (1550 aa).

The catalytic stretch occupies residues 1–741 (MPEVRSSTQS…KERVLKGTVK (741 aa)). 3 helical membrane-spanning segments follow: residues 26–46 (GAGL…TSVT), 47–67 (LPPE…FIVG), and 106–126 (GLLG…LFLS). Residues 147-240 (EWPTVDIFVP…YILIFDCDHV (94 aa)) are catalytic subdomain A. Residue aspartate 189 is part of the active site. Substrate is bound by residues aspartate 236 and aspartate 238. The segment at 317–377 (TAIEQIGGFA…GQRVRWARGM (61 aa)) is catalytic subdomain B. Aspartate 333 is a catalytic residue. 5 helical membrane passes run 398 to 418 (LCYL…IFLS), 423 to 443 (FLFF…AYAI), 468 to 488 (VYET…LLSP), 507 to 527 (FDLG…GGLA), and 547 to 567 (LLNS…IAVG). Residues 572 to 647 (QKRNSHRIPA…PARIIRAGNG (76 aa)) form the PilZ domain. Disordered regions lie at residues 708–731 (VHRS…NPSR) and 768–813 (APAH…QPLA). Residues 742 to 1550 (MVSLLALLTF…KQLEDERRKS (809 aa)) form a cyclic di-GMP binding domain region. A compositionally biased stretch (low complexity) spans 768-796 (APAHQPEASDLPPLPALLPATSGAAQAGS). A helical transmembrane segment spans residues 1513–1533 (VLLVGLLGCILIVSVLARALA).

The protein in the N-terminal section; belongs to the glycosyltransferase 2 family. This sequence in the C-terminal section; belongs to the AcsB/BcsB family. It depends on Mg(2+) as a cofactor.

Its subcellular location is the cell inner membrane. The catalysed reaction is [(1-&gt;4)-beta-D-glucosyl](n) + UDP-alpha-D-glucose = [(1-&gt;4)-beta-D-glucosyl](n+1) + UDP + H(+). It functions in the pathway glycan metabolism; bacterial cellulose biosynthesis. Bifunctional protein comprised of a catalytic subunit and a regulatory subunit. The catalytic subunit of cellulose synthase polymerizes uridine 5'-diphosphate glucose to cellulose in a processive way. The thick cellulosic mats generated by this enzyme probably provide a specialized protective environment to the bacterium. The regulatory subunit binds bis-(3'-5') cyclic diguanylic acid (c-di-GMP). The chain is Cellulose synthase 1 (acsAB) from Novacetimonas hansenii (Komagataeibacter hansenii).